Reading from the N-terminus, the 511-residue chain is Glucans biosynthesis protein G (511 aa).

Positions 1-22 (MMKMRWLGAAIMLTLYASSSWA) are cleaved as a signal peptide.

It belongs to the OpgD/OpgG family.

The protein resides in the periplasm. It participates in glycan metabolism; osmoregulated periplasmic glucan (OPG) biosynthesis. In terms of biological role, involved in the biosynthesis of osmoregulated periplasmic glucans (OPGs). The protein is Glucans biosynthesis protein G of Salmonella enteritidis PT4 (strain P125109).